We begin with the raw amino-acid sequence, 352 residues long: tRNA pseudouridine synthase D (352 aa).

The active-site Nucleophile is the Asp81. Residues 158–306 (GVPNYFGQQR…RHERRTLLLK (149 aa)) enclose the TRUD domain.

This sequence belongs to the pseudouridine synthase TruD family.

The catalysed reaction is uridine(13) in tRNA = pseudouridine(13) in tRNA. Responsible for synthesis of pseudouridine from uracil-13 in transfer RNAs. The polypeptide is tRNA pseudouridine synthase D (Photobacterium profundum (strain SS9)).